A 116-amino-acid polypeptide reads, in one-letter code: Non-specific lipid-transfer protein (116 aa).

An N-terminal signal peptide occupies residues 1-25 (MASMVMNVLCVAVACMVFSASYADA). 4 cysteine pairs are disulfide-bonded: Cys28-Cys75, Cys38-Cys52, Cys53-Cys98, and Cys73-Cys112.

This sequence belongs to the plant LTP family.

Plant non-specific lipid-transfer proteins transfer phospholipids as well as galactolipids across membranes. May play a role in wax or cutin deposition in the cell walls of expanding epidermal cells and certain secretory tissues. The sequence is that of Non-specific lipid-transfer protein from Gerbera hybrida (Daisy).